A 180-amino-acid chain; its full sequence is Probable galaptin lec-8 (180 aa).

Residues 11 to 138 enclose the Galectin domain; sequence SAHAIREQLR…AAHIDEISFS (128 aa).

The polypeptide is Probable galaptin lec-8 (lec-8) (Caenorhabditis elegans).